The sequence spans 228 residues: Aquaporin Z 1 (228 aa).

2 helical membrane passes run F9–F29 and I34–V54. The NPA 1 signature appears at N63–A65. Transmembrane regions (helical) follow at residues V82–I102, L129–G149, and P156–I176. Positions N184 to A186 match the NPA 2 motif. The helical transmembrane segment at W204 to V224 threads the bilayer.

This sequence belongs to the MIP/aquaporin (TC 1.A.8) family. In terms of assembly, homotetramer.

It localises to the cell inner membrane. The enzyme catalyses H2O(in) = H2O(out). Channel that permits osmotically driven movement of water in both directions. It is involved in the osmoregulation and in the maintenance of cell turgor during volume expansion in rapidly growing cells. It mediates rapid entry or exit of water in response to abrupt changes in osmolarity. The polypeptide is Aquaporin Z 1 (Rhizobium meliloti (strain 1021) (Ensifer meliloti)).